We begin with the raw amino-acid sequence, 189 residues long: Potassium-transporting ATPase KdpC subunit (189 aa).

Residues 10–30 form a helical membrane-spanning segment; the sequence is VIFAMLTLICGVIYPYAITGI.

Belongs to the KdpC family. In terms of assembly, the system is composed of three essential subunits: KdpA, KdpB and KdpC.

It is found in the cell inner membrane. In terms of biological role, part of the high-affinity ATP-driven potassium transport (or Kdp) system, which catalyzes the hydrolysis of ATP coupled with the electrogenic transport of potassium into the cytoplasm. This subunit acts as a catalytic chaperone that increases the ATP-binding affinity of the ATP-hydrolyzing subunit KdpB by the formation of a transient KdpB/KdpC/ATP ternary complex. The protein is Potassium-transporting ATPase KdpC subunit of Janthinobacterium sp. (strain Marseille) (Minibacterium massiliensis).